Consider the following 607-residue polypeptide: UvrABC system protein C (607 aa).

In terms of domain architecture, GIY-YIG spans 16 to 94 (GRPGVYRMFD…IKEWRPPYNI (79 aa)). In terms of domain architecture, UVR spans 203-238 (NALTDELSGAMEQAASTLDFERAAELRDQISLLRRV).

It belongs to the UvrC family. In terms of assembly, interacts with UvrB in an incision complex.

It is found in the cytoplasm. In terms of biological role, the UvrABC repair system catalyzes the recognition and processing of DNA lesions. UvrC both incises the 5' and 3' sides of the lesion. The N-terminal half is responsible for the 3' incision and the C-terminal half is responsible for the 5' incision. In Pseudomonas fluorescens (strain SBW25), this protein is UvrABC system protein C.